We begin with the raw amino-acid sequence, 1001 residues long: Phosphoenolpyruvate carboxylase (1001 aa).

Catalysis depends on residues H189 and K642.

This sequence belongs to the PEPCase type 1 family. The cofactor is Mg(2+).

The enzyme catalyses oxaloacetate + phosphate = phosphoenolpyruvate + hydrogencarbonate. In terms of biological role, forms oxaloacetate, a four-carbon dicarboxylic acid source for the tricarboxylic acid cycle. The sequence is that of Phosphoenolpyruvate carboxylase from Prochlorococcus marinus (strain SARG / CCMP1375 / SS120).